The chain runs to 544 residues: Methionine--tRNA ligase 2 (544 aa).

Residues 10-20 carry the 'HIGH' region motif; it reads PYANGSLHLGH. Zn(2+)-binding residues include Cys-141, Cys-144, Cys-153, and Cys-156. A 'KMSKS' region motif is present at residues 329 to 333; the sequence is KLSTS. Thr-332 is a binding site for ATP.

The protein belongs to the class-I aminoacyl-tRNA synthetase family. MetG type 1 subfamily. Monomer. The cofactor is Zn(2+).

The protein resides in the cytoplasm. The enzyme catalyses tRNA(Met) + L-methionine + ATP = L-methionyl-tRNA(Met) + AMP + diphosphate. Is required not only for elongation of protein synthesis but also for the initiation of all mRNA translation through initiator tRNA(fMet) aminoacylation. The sequence is that of Methionine--tRNA ligase 2 from Bacillus anthracis.